The following is a 218-amino-acid chain: Thiopurine S-methyltransferase (218 aa).

Positions 10, 45, 66, and 123 each coordinate S-adenosyl-L-methionine.

The protein belongs to the class I-like SAM-binding methyltransferase superfamily. TPMT family.

It localises to the cytoplasm. It carries out the reaction S-adenosyl-L-methionine + a thiopurine = S-adenosyl-L-homocysteine + a thiopurine S-methylether.. This is Thiopurine S-methyltransferase from Pseudomonas aeruginosa (strain UCBPP-PA14).